The following is a 501-amino-acid chain: Actin nucleation-promoting factor WASL (501 aa).

Residue S2 is modified to N-acetylserine. In terms of domain architecture, WH1 spans 31-138 (LGKKCVTMSS…KAVTDLLGRR (108 aa)). 2 disordered regions span residues 135–158 (LGRR…PMAT) and 180–202 (SHTK…DIGT). Over residues 183 to 195 (KEKKKGKAKKKRL) the composition is skewed to basic residues. Positions 200 to 213 (IGTPSNFQHIGHVG) constitute a CRIB domain. S239 carries the post-translational modification Phosphoserine; by TNK2. Y253 bears the Phosphotyrosine; by FAK1 and TNK2 mark. Disordered regions lie at residues 263–405 (EAVK…KAAL) and 442–501 (QLKS…EWED). 2 stretches are compositionally biased toward pro residues: residues 273–361 (APPP…PPPL) and 368–387 (APPP…PPGL). Residue R304 is modified to Omega-N-methylarginine. WH2 domains are found at residues 401-418 (NKAA…LKKV) and 429-446 (GRDA…LKSV). Residues 442–453 (QLKSVSDGQEST) are compositionally biased toward polar residues. S480 and S481 each carry phosphoserine. A compositionally biased stretch (acidic residues) spans 482–501 (DEDEDDDDEEDFQDDDEWED).

Binds actin and the Arp2/3 complex. Interacts with CDC42. Interacts with FCHSD1. Interacts with FCHSD2. Binds to SH3 domains of GRB2. Interacts with the C-terminal SH3 domain of DNMBP. Interacts with SNX9. Interacts with the WW domains of PRPF40A/FBP11. Interacts with PTK2/FAK1. Interacts with PACSIN1, PACSIN2 and PACSIN3. Interacts with NOSTRIN. Binds to TNK2. Interacts with SNX33. Interacts with NONO (via second RRM domain); the interaction is direct. Component of a multiprotein complex with NONO and SFPQ; associates with the complex via direct interaction with NONO. Post-translationally, phosphorylation at Ser-239, Tyr-253, Ser-480 and Ser-481 enhances actin polymerization activity.

The protein localises to the cytoplasm. Its subcellular location is the cytoskeleton. It is found in the nucleus. Regulates actin polymerization by stimulating the actin-nucleating activity of the Arp2/3 complex. Involved in various processes, such as mitosis and cytokinesis, via its role in the regulation of actin polymerization. Together with CDC42, involved in the extension and maintenance of the formation of thin, actin-rich surface projections called filopodia. In addition to its role in the cytoplasm, also plays a role in the nucleus by regulating gene transcription, probably by promoting nuclear actin polymerization. Binds to HSF1/HSTF1 and forms a complex on heat shock promoter elements (HSE) that negatively regulates HSP90 expression. Plays a role in dendrite spine morphogenesis. The sequence is that of Actin nucleation-promoting factor WASL (Wasl) from Rattus norvegicus (Rat).